A 180-amino-acid polypeptide reads, in one-letter code: Probable RNA 2'-phosphotransferase (180 aa).

It belongs to the KptA/TPT1 family.

Functionally, removes the 2'-phosphate from RNA via an intermediate in which the phosphate is ADP-ribosylated by NAD followed by a presumed transesterification to release the RNA and generate ADP-ribose 1''-2''-cyclic phosphate (APPR&gt;P). May function as an ADP-ribosylase. The polypeptide is Probable RNA 2'-phosphotransferase (Pectobacterium atrosepticum (strain SCRI 1043 / ATCC BAA-672) (Erwinia carotovora subsp. atroseptica)).